The sequence spans 466 residues: Cysteine--tRNA ligase (466 aa).

Zn(2+) is bound at residue Cys-28. Residues 30–40 (PTVYNYIHIGN) carry the 'HIGH' region motif. Zn(2+)-binding residues include Cys-208, His-233, and Glu-237. A 'KMSKS' region motif is present at residues 265–269 (KMSKS). An ATP-binding site is contributed by Lys-268.

The protein belongs to the class-I aminoacyl-tRNA synthetase family. Monomer. Requires Zn(2+) as cofactor.

The protein resides in the cytoplasm. It carries out the reaction tRNA(Cys) + L-cysteine + ATP = L-cysteinyl-tRNA(Cys) + AMP + diphosphate. In Staphylococcus aureus (strain Mu3 / ATCC 700698), this protein is Cysteine--tRNA ligase.